Consider the following 346-residue polypeptide: MQADILDGKQKRVNLNSKRLVNCNQVDVNQLVPIKYKWAWEHYLNGCANNWLPTEIPMGKDIELWKSDRLSEDERRVILLNLGFFSTAESLVGNNIVLAIFKHVTNPEARQYLLRQAFEEAVHTHTFLYICESLGLDEKEIFNAYNERAAIKAKDDFQMEITGKVLDPNFRTDSVEGLQEFVKNLVGYYIIMEGIFFYSGFVMILSFHRQNKMIGIGEQYQYILRDETIHLNFGIDLINGIKEENPEIWTPELQQEIVELIKRAVDLEIEYAQDCLPRGILGLRASMFIDYVQHIADRRLERIGLKPIYHTKNPFPWMSETIDLNKEKNFFETRVIEYQHAASLTW.

The Fe cation site is built by E89, E120, and H123. Y129 is an active-site residue. Fe cation is bound by residues E193, E227, and H230.

The protein belongs to the ribonucleoside diphosphate reductase small chain family. In terms of assembly, tetramer of two alpha and two beta subunits. The cofactor is Fe cation.

It carries out the reaction a 2'-deoxyribonucleoside 5'-diphosphate + [thioredoxin]-disulfide + H2O = a ribonucleoside 5'-diphosphate + [thioredoxin]-dithiol. In terms of biological role, provides the precursors necessary for DNA synthesis. Catalyzes the biosynthesis of deoxyribonucleotides from the corresponding ribonucleotides. In Chlamydia trachomatis serovar D (strain ATCC VR-885 / DSM 19411 / UW-3/Cx), this protein is Ribonucleoside-diphosphate reductase subunit beta (nrdB).